The primary structure comprises 187 residues: UPF0398 protein MW1336 (187 aa).

The protein belongs to the UPF0398 family.

This is UPF0398 protein MW1336 from Staphylococcus aureus (strain MW2).